Consider the following 375-residue polypeptide: Anhydro-N-acetylmuramic acid kinase (375 aa).

Residue 19 to 26 (GTSLDGVD) coordinates ATP.

It belongs to the anhydro-N-acetylmuramic acid kinase family.

The catalysed reaction is 1,6-anhydro-N-acetyl-beta-muramate + ATP + H2O = N-acetyl-D-muramate 6-phosphate + ADP + H(+). The protein operates within amino-sugar metabolism; 1,6-anhydro-N-acetylmuramate degradation. It participates in cell wall biogenesis; peptidoglycan recycling. Functionally, catalyzes the specific phosphorylation of 1,6-anhydro-N-acetylmuramic acid (anhMurNAc) with the simultaneous cleavage of the 1,6-anhydro ring, generating MurNAc-6-P. Is required for the utilization of anhMurNAc either imported from the medium or derived from its own cell wall murein, and thus plays a role in cell wall recycling. The polypeptide is Anhydro-N-acetylmuramic acid kinase (Ruegeria sp. (strain TM1040) (Silicibacter sp.)).